The chain runs to 75 residues: Putative UPF0377 protein YJL222W-A (75 aa).

Belongs to the UPF0377 family.

In Saccharomyces cerevisiae (strain ATCC 204508 / S288c) (Baker's yeast), this protein is Putative UPF0377 protein YJL222W-A.